The sequence spans 379 residues: LIM/homeobox protein Lhx9 (379 aa).

LIM zinc-binding domains lie at T51–V112 and Q113–G175. 2 disordered regions span residues E232–K257 and R310–F379. Basic residues predominate over residues K248 to K257. A DNA-binding region (homeobox) is located at residues T249–L308. Residues A326–F379 are compositionally biased toward polar residues.

Isoform 1 and isoform 3 are expressed in ovary, testis, brain and heart. Isoform 4 and isoform 5 are expressed in brain.

Its subcellular location is the nucleus. Its function is as follows. May be involved in gonadal development. The chain is LIM/homeobox protein Lhx9 (lhx9) from Glandirana rugosa (Japanese wrinkled frog).